A 320-amino-acid chain; its full sequence is Arginine/serine-rich protein 1 (320 aa).

Residues 1-22 (MKTEASPGRLHEDVKLIFDKKA) show a composition bias toward basic and acidic residues. 2 disordered regions span residues 1–180 (MKTE…SRER) and 215–299 (LKEM…ADIV). Composition is skewed to low complexity over residues 24 to 48 (SGRS…SRGS) and 56 to 74 (TSSS…SNSR). Composition is skewed to basic residues over residues 75–102 (SRSR…RARS), 114–158 (RRRH…RYRC), and 166–175 (RSPRPYRSRS). Phosphoserine is present on residues serine 135 and serine 137. The span at 215–238 (LKEMEQQEERKRRSSSDEEERVRV) shows a compositional bias: basic and acidic residues. The segment covering 271 to 293 (VFSNNNAIAKPSSSPTLSDSKVT) has biased composition (polar residues).

It belongs to the RSRP family. Phosphorylated. Phosphorylation at Ser-135 and Ser-137 mediates the interaction with spliceosome proteins.

The protein localises to the nucleus. In terms of biological role, probably acts as a spliceosomal factor that contributes to spliceosome assembly and regulates the isoform switching of proteins such as PARP6. The polypeptide is Arginine/serine-rich protein 1 (rsrp1) (Danio rerio (Zebrafish)).